The following is a 449-amino-acid chain: Bifunctional protein GlmU (449 aa).

The pyrophosphorylase stretch occupies residues 1-225 (MLSVAILAAG…NGELQGINNR (225 aa)). Residues 7–10 (LAAG), Lys21, Gln73, and 78–79 (GT) contribute to the UDP-N-acetyl-alpha-D-glucosamine site. Asp103 contacts Mg(2+). The UDP-N-acetyl-alpha-D-glucosamine site is built by Gly140, Glu154, Asn169, and Asn223. Asn223 is a Mg(2+) binding site. Positions 226–246 (IHLSECEECIQNSIKEKHMLN) are linker. An N-acetyltransferase region spans residues 247 to 449 (GVTFINKASC…NIENWKKKKS (203 aa)). UDP-N-acetyl-alpha-D-glucosamine-binding residues include Arg328 and Lys346. His358 functions as the Proton acceptor in the catalytic mechanism. Residues Tyr361 and Asn372 each coordinate UDP-N-acetyl-alpha-D-glucosamine. Acetyl-CoA-binding residues include Ala375, Ala418, and Arg435.

It in the N-terminal section; belongs to the N-acetylglucosamine-1-phosphate uridyltransferase family. In the C-terminal section; belongs to the transferase hexapeptide repeat family. As to quaternary structure, homotrimer. Requires Mg(2+) as cofactor.

It is found in the cytoplasm. The enzyme catalyses alpha-D-glucosamine 1-phosphate + acetyl-CoA = N-acetyl-alpha-D-glucosamine 1-phosphate + CoA + H(+). The catalysed reaction is N-acetyl-alpha-D-glucosamine 1-phosphate + UTP + H(+) = UDP-N-acetyl-alpha-D-glucosamine + diphosphate. Its pathway is nucleotide-sugar biosynthesis; UDP-N-acetyl-alpha-D-glucosamine biosynthesis; N-acetyl-alpha-D-glucosamine 1-phosphate from alpha-D-glucosamine 6-phosphate (route II): step 2/2. It participates in nucleotide-sugar biosynthesis; UDP-N-acetyl-alpha-D-glucosamine biosynthesis; UDP-N-acetyl-alpha-D-glucosamine from N-acetyl-alpha-D-glucosamine 1-phosphate: step 1/1. It functions in the pathway bacterial outer membrane biogenesis; LPS lipid A biosynthesis. Functionally, catalyzes the last two sequential reactions in the de novo biosynthetic pathway for UDP-N-acetylglucosamine (UDP-GlcNAc). The C-terminal domain catalyzes the transfer of acetyl group from acetyl coenzyme A to glucosamine-1-phosphate (GlcN-1-P) to produce N-acetylglucosamine-1-phosphate (GlcNAc-1-P), which is converted into UDP-GlcNAc by the transfer of uridine 5-monophosphate (from uridine 5-triphosphate), a reaction catalyzed by the N-terminal domain. This Prochlorococcus marinus (strain AS9601) protein is Bifunctional protein GlmU.